Reading from the N-terminus, the 245-residue chain is U21-ctenitoxin-Pn1a (245 aa).

The Peptidase S1 domain maps to 1–245 (IVYGTVTTPG…FRSWMDKVMT (245 aa)). A disulfide bridge links C30 with C46. Active-site charge relay system residues include H45 and D95. Cystine bridges form between C161-C183 and C192-C221. The active-site Charge relay system is the S196.

In terms of tissue distribution, expressed by the venom gland.

The protein resides in the secreted. In terms of biological role, protease. Hydrolyzes gelatin and succinyl casein. The sequence is that of U21-ctenitoxin-Pn1a from Phoneutria nigriventer (Brazilian armed spider).